Reading from the N-terminus, the 173-residue chain is MDIAIQHPWFKRALGPFYPSRLFDQFFGEGLFEYDLLPFLSSTISPYYRQSLFRSVLDSGISEVRSDRDKFVIFLDVKHFSPEDLTVKVQEDFVEIHGKHNERQDDHGYISREFHRRYRLPSNVDQSALSCSLSADGMLTFSGPKVTSGMDAGHSERAIPVSREEKPSSAPSS.

Residue methionine 1 is modified to N-acetylmethionine. Residues 1–63 (MDIAIQHPWF…RSVLDSGISE (63 aa)) are required for complex formation with BFSP1 and BFSP2. At glutamine 6 the chain carries Deamidated glutamine; partial. Serine 45 is modified (phosphoserine). Position 50 is a deamidated glutamine; partial (glutamine 50). A sHSP domain is found at 52–162 (LFRSVLDSGI…GHSERAIPVS (111 aa)). The residue at position 70 (lysine 70) is an N6-acetyllysine. Glutamine 90 is subject to Deamidated glutamine; partial. Residue lysine 99 is modified to N6-acetyllysine. Histidine 100 contributes to the Zn(2+) binding site. The residue at position 101 (asparagine 101) is a Deamidated asparagine; partial. Residues glutamate 102 and histidine 107 each contribute to the Zn(2+) site. Serine 122 is subject to Phosphoserine. Asparagine 123 carries the deamidated asparagine; partial modification. Positions 144-173 (PKVTSGMDAGHSERAIPVSREEKPSSAPSS) are disordered. The span at 153–167 (GHSERAIPVSREEKP) shows a compositional bias: basic and acidic residues. A Zn(2+)-binding site is contributed by histidine 154. O-linked (GlcNAc) serine glycosylation is present at serine 162.

Belongs to the small heat shock protein (HSP20) family. In terms of assembly, heteromer composed of three CRYAA and one CRYAB subunits. Inter-subunit bridging via zinc ions enhances stability, which is crucial as there is no protein turn over in the lens. Can also form homodimers and homotetramers (dimers of dimers) which serve as the building blocks of homooligomers. Within homooligomers, the zinc-binding motif is created from residues of 3 different molecules. His-100 and Glu-102 from one molecule are ligands of the zinc ion, and His-107 and His-154 residues from additional molecules complete the site with tetrahedral coordination geometry. Part of a complex required for lens intermediate filament formation composed of BFSP1, BFSP2 and CRYAA. Post-translationally, acetylation at Lys-70 may increase chaperone activity. Undergoes age-dependent proteolytical cleavage at the C-terminus.

It is found in the cytoplasm. The protein localises to the nucleus. In terms of biological role, contributes to the transparency and refractive index of the lens. Acts as a chaperone, preventing aggregation of various proteins under a wide range of stress conditions. Required for the correct formation of lens intermediate filaments as part of a complex composed of BFSP1, BFSP2 and CRYAA. The sequence is that of Alpha-crystallin A chain (CRYAA) from Phocoena phocoena (Harbor porpoise).